Reading from the N-terminus, the 258-residue chain is F-box/SPRY domain-containing protein 1 (258 aa).

The F-box domain occupies 6–54 (MEYAPNIPDNVLELIFSFLKLQDLRNCTLVCKSWYRFFCDENNEVWRAQ). Positions 64-256 (FKNDLLTVVP…ISMVYLGAPL (193 aa)) constitute a B30.2/SPRY domain.

This sequence belongs to the FBXO45/Fsn family. In terms of assembly, component of an E3 ubiquitin ligase complex composed of hiw and Fsn.

It is found in the synapse. It functions in the pathway protein modification; protein ubiquitination. Functionally, required in the presynaptic motoneuron to down-regulate the levels of wnd and restrain synaptic terminal growth at the neuromuscular junction (NMJ). The sequence is that of F-box/SPRY domain-containing protein 1 from Anopheles gambiae (African malaria mosquito).